Consider the following 508-residue polypeptide: Photosystem II CP47 reaction center protein (508 aa).

A run of 6 helical transmembrane segments spans residues 21–36, 101–115, 140–156, 203–218, 237–252, and 457–472; these read AVHI…WAGS, IVFS…TWHW, GIHL…FGAF, VAAG…FHLS, VLSS…AFIV, and TFAL…HGAR.

This sequence belongs to the PsbB/PsbC family. PsbB subfamily. In terms of assembly, PSII is composed of 1 copy each of membrane proteins PsbA, PsbB, PsbC, PsbD, PsbE, PsbF, PsbH, PsbI, PsbJ, PsbK, PsbL, PsbM, PsbT, PsbX, PsbY, PsbZ, Psb30/Ycf12, at least 3 peripheral proteins of the oxygen-evolving complex and a large number of cofactors. It forms dimeric complexes. Binds multiple chlorophylls. PSII binds additional chlorophylls, carotenoids and specific lipids. is required as a cofactor.

The protein localises to the plastid. The protein resides in the chloroplast thylakoid membrane. Functionally, one of the components of the core complex of photosystem II (PSII). It binds chlorophyll and helps catalyze the primary light-induced photochemical processes of PSII. PSII is a light-driven water:plastoquinone oxidoreductase, using light energy to abstract electrons from H(2)O, generating O(2) and a proton gradient subsequently used for ATP formation. This Welwitschia mirabilis (Tree tumbo) protein is Photosystem II CP47 reaction center protein.